The chain runs to 454 residues: Bifunctional protein GlmU (454 aa).

Positions methionine 1–arginine 232 are pyrophosphorylase. UDP-N-acetyl-alpha-D-glucosamine contacts are provided by residues leucine 11 to glycine 14, lysine 25, glutamine 78, and glycine 83 to threonine 84. Aspartate 108 is a binding site for Mg(2+). Glycine 144, glutamate 158, asparagine 173, and asparagine 230 together coordinate UDP-N-acetyl-alpha-D-glucosamine. Asparagine 230 provides a ligand contact to Mg(2+). Residues valine 233–alanine 253 form a linker region. The segment at glycine 254–lysine 454 is N-acetyltransferase. The UDP-N-acetyl-alpha-D-glucosamine site is built by arginine 319 and lysine 337. Histidine 349 functions as the Proton acceptor in the catalytic mechanism. Positions 352 and 363 each coordinate UDP-N-acetyl-alpha-D-glucosamine. Residues alanine 366, asparagine 372–tyrosine 373, serine 391, serine 409, and arginine 426 contribute to the acetyl-CoA site.

This sequence in the N-terminal section; belongs to the N-acetylglucosamine-1-phosphate uridyltransferase family. It in the C-terminal section; belongs to the transferase hexapeptide repeat family. As to quaternary structure, homotrimer. Mg(2+) serves as cofactor.

It is found in the cytoplasm. The catalysed reaction is alpha-D-glucosamine 1-phosphate + acetyl-CoA = N-acetyl-alpha-D-glucosamine 1-phosphate + CoA + H(+). It catalyses the reaction N-acetyl-alpha-D-glucosamine 1-phosphate + UTP + H(+) = UDP-N-acetyl-alpha-D-glucosamine + diphosphate. It participates in nucleotide-sugar biosynthesis; UDP-N-acetyl-alpha-D-glucosamine biosynthesis; N-acetyl-alpha-D-glucosamine 1-phosphate from alpha-D-glucosamine 6-phosphate (route II): step 2/2. Its pathway is nucleotide-sugar biosynthesis; UDP-N-acetyl-alpha-D-glucosamine biosynthesis; UDP-N-acetyl-alpha-D-glucosamine from N-acetyl-alpha-D-glucosamine 1-phosphate: step 1/1. The protein operates within bacterial outer membrane biogenesis; LPS lipid A biosynthesis. Catalyzes the last two sequential reactions in the de novo biosynthetic pathway for UDP-N-acetylglucosamine (UDP-GlcNAc). The C-terminal domain catalyzes the transfer of acetyl group from acetyl coenzyme A to glucosamine-1-phosphate (GlcN-1-P) to produce N-acetylglucosamine-1-phosphate (GlcNAc-1-P), which is converted into UDP-GlcNAc by the transfer of uridine 5-monophosphate (from uridine 5-triphosphate), a reaction catalyzed by the N-terminal domain. In Brucella anthropi (strain ATCC 49188 / DSM 6882 / CCUG 24695 / JCM 21032 / LMG 3331 / NBRC 15819 / NCTC 12168 / Alc 37) (Ochrobactrum anthropi), this protein is Bifunctional protein GlmU.